A 191-amino-acid polypeptide reads, in one-letter code: Large ribosomal subunit protein bL12cz (191 aa).

The N-terminal 58 residues, 1–58 (MASTTLSIATTIRSSSYPTLASINHFPSRTTTIEFPSRFGGGSSSTLTHRATHLRPIA), are a transit peptide targeting the chloroplast.

Belongs to the bacterial ribosomal protein bL12 family.

It localises to the plastid. The protein localises to the chloroplast. The protein is Large ribosomal subunit protein bL12cz (RPL12A) of Arabidopsis thaliana (Mouse-ear cress).